The following is a 166-amino-acid chain: Large ribosomal subunit protein uL10 (166 aa).

It belongs to the universal ribosomal protein uL10 family. In terms of assembly, part of the ribosomal stalk of the 50S ribosomal subunit. The N-terminus interacts with L11 and the large rRNA to form the base of the stalk. The C-terminus forms an elongated spine to which L12 dimers bind in a sequential fashion forming a multimeric L10(L12)X complex.

Functionally, forms part of the ribosomal stalk, playing a central role in the interaction of the ribosome with GTP-bound translation factors. The sequence is that of Large ribosomal subunit protein uL10 from Ureaplasma urealyticum serovar 10 (strain ATCC 33699 / Western).